Consider the following 236-residue polypeptide: Orotidine 5'-phosphate decarboxylase (236 aa).

Substrate is bound by residues Asp14, Lys36, 63–72 (DLKFHDIPNT), Thr122, Arg183, Gln192, Gly212, and Arg213. Residue Lys65 is the Proton donor of the active site.

Belongs to the OMP decarboxylase family. Type 1 subfamily. In terms of assembly, homodimer.

It carries out the reaction orotidine 5'-phosphate + H(+) = UMP + CO2. It functions in the pathway pyrimidine metabolism; UMP biosynthesis via de novo pathway; UMP from orotate: step 2/2. In terms of biological role, catalyzes the decarboxylation of orotidine 5'-monophosphate (OMP) to uridine 5'-monophosphate (UMP). The sequence is that of Orotidine 5'-phosphate decarboxylase from Chromohalobacter salexigens (strain ATCC BAA-138 / DSM 3043 / CIP 106854 / NCIMB 13768 / 1H11).